The sequence spans 230 residues: V-type proton ATPase subunit E (230 aa).

The protein belongs to the V-ATPase E subunit family. As to quaternary structure, V-ATPase is a heteromultimeric enzyme composed of a peripheral catalytic V1 complex (components A to H) attached to an integral membrane V0 proton pore complex (components: a, c, c', c'' and d).

Functionally, subunit of the peripheral V1 complex of vacuolar ATPase essential for assembly or catalytic function. V-ATPase is responsible for acidifying a variety of intracellular compartments in eukaryotic cells. In Citrus limon (Lemon), this protein is V-type proton ATPase subunit E (VATE).